We begin with the raw amino-acid sequence, 227 residues long: Cytochrome c oxidase subunit 2 (227 aa).

Residues 1–14 (MAYPFQLGLQDATS) lie on the Mitochondrial intermembrane side of the membrane. A helical membrane pass occupies residues 15-45 (PIMEELLHFHDHALMIVFLISSLVLYIISLM). The Mitochondrial matrix portion of the chain corresponds to 46 to 59 (LTTKLTHTSTMDAQ). The chain crosses the membrane as a helical span at residues 60-87 (EVETVWTILPAIILILIALPSLRILYMM). Residues 88 to 227 (DEINNPSLTV…YFETWSALMV (140 aa)) are Mitochondrial intermembrane-facing. Residues His161, Cys196, Glu198, Cys200, His204, and Met207 each contribute to the Cu cation site. A Mg(2+)-binding site is contributed by Glu198. Phosphotyrosine is present on Tyr218.

This sequence belongs to the cytochrome c oxidase subunit 2 family. In terms of assembly, component of the cytochrome c oxidase (complex IV, CIV), a multisubunit enzyme composed of 14 subunits. The complex is composed of a catalytic core of 3 subunits MT-CO1, MT-CO2 and MT-CO3, encoded in the mitochondrial DNA, and 11 supernumerary subunits COX4I, COX5A, COX5B, COX6A, COX6B, COX6C, COX7A, COX7B, COX7C, COX8 and NDUFA4, which are encoded in the nuclear genome. The complex exists as a monomer or a dimer and forms supercomplexes (SCs) in the inner mitochondrial membrane with NADH-ubiquinone oxidoreductase (complex I, CI) and ubiquinol-cytochrome c oxidoreductase (cytochrome b-c1 complex, complex III, CIII), resulting in different assemblies (supercomplex SCI(1)III(2)IV(1) and megacomplex MCI(2)III(2)IV(2)). Found in a complex with TMEM177, COA6, COX18, COX20, SCO1 and SCO2. Interacts with TMEM177 in a COX20-dependent manner. Interacts with COX20. Interacts with COX16. Cu cation is required as a cofactor.

The protein localises to the mitochondrion inner membrane. The enzyme catalyses 4 Fe(II)-[cytochrome c] + O2 + 8 H(+)(in) = 4 Fe(III)-[cytochrome c] + 2 H2O + 4 H(+)(out). In terms of biological role, component of the cytochrome c oxidase, the last enzyme in the mitochondrial electron transport chain which drives oxidative phosphorylation. The respiratory chain contains 3 multisubunit complexes succinate dehydrogenase (complex II, CII), ubiquinol-cytochrome c oxidoreductase (cytochrome b-c1 complex, complex III, CIII) and cytochrome c oxidase (complex IV, CIV), that cooperate to transfer electrons derived from NADH and succinate to molecular oxygen, creating an electrochemical gradient over the inner membrane that drives transmembrane transport and the ATP synthase. Cytochrome c oxidase is the component of the respiratory chain that catalyzes the reduction of oxygen to water. Electrons originating from reduced cytochrome c in the intermembrane space (IMS) are transferred via the dinuclear copper A center (CU(A)) of subunit 2 and heme A of subunit 1 to the active site in subunit 1, a binuclear center (BNC) formed by heme A3 and copper B (CU(B)). The BNC reduces molecular oxygen to 2 water molecules using 4 electrons from cytochrome c in the IMS and 4 protons from the mitochondrial matrix. In Canis aureus (Golden jackal), this protein is Cytochrome c oxidase subunit 2 (MT-CO2).